The chain runs to 507 residues: Maturase K (507 aa).

This sequence belongs to the intron maturase 2 family. MatK subfamily.

The protein resides in the plastid. Its subcellular location is the chloroplast. In terms of biological role, usually encoded in the trnK tRNA gene intron. Probably assists in splicing its own and other chloroplast group II introns. The chain is Maturase K from Craterostigma plantagineum (Blue gem).